A 388-amino-acid chain; its full sequence is MSVIAILAMVVGVQAELKQINVIFRHGDRIPDEKNEMYPKDPYLYYDFYPLERGELTNSGKMREYQLGQFLRERYGDFLGDIYTEESVSALSSFYDRTKMSLQLVLAALYPPNKLQQWNEDLNWQPIATKYLRRYEDNIFLPEDCLLFTIELDRVLESPRGKYEFSKYDKLKKKLEEWTGKNITTPWDYYYIYHTLVAEQSYGLTLPSWTNNIFPRGELFDATVFTYNITNSTPLLKKLYGGPLLRIFTKHMLDVVSGTQKKKRKIYLFSGHESNIASVLHALQLYYPHVPEYSSSIIMELHNIEGTHYVKIVYYLGIPSEARELQLPGCEVLCPLYKYLQLIENVIPSNEELICDKRFVDESANNLSIEELDFVKLNLIRIAGTENK.

The signal sequence occupies residues 1-15 (MSVIAILAMVVGVQA). H26 (nucleophile) is an active-site residue. Cystine bridges form between C145/C355 and C330/C334. N-linked (GlcNAc...) asparagine glycosylation is found at N182 and N228. E273 acts as the Proton donor in catalysis. The N-linked (GlcNAc...) asparagine glycan is linked to N366.

Belongs to the histidine acid phosphatase family. In terms of tissue distribution, expressed by the venom gland.

The protein resides in the secreted. The catalysed reaction is a phosphate monoester + H2O = an alcohol + phosphate. In Apis mellifera (Honeybee), this protein is Venom acid phosphatase Acph-1.